Consider the following 404-residue polypeptide: Cysteine desulfurase IscS (404 aa).

Residues 75–76, Asn-155, Gln-183, and 203–205 contribute to the pyridoxal 5'-phosphate site; these read AT and SAH. At Lys-206 the chain carries N6-(pyridoxal phosphate)lysine. Thr-243 lines the pyridoxal 5'-phosphate pocket. Residue Cys-328 is the Cysteine persulfide intermediate of the active site. Cys-328 lines the [2Fe-2S] cluster pocket.

Belongs to the class-V pyridoxal-phosphate-dependent aminotransferase family. NifS/IscS subfamily. As to quaternary structure, homodimer. Forms a heterotetramer with IscU, interacts with other sulfur acceptors. It depends on pyridoxal 5'-phosphate as a cofactor.

It localises to the cytoplasm. It carries out the reaction (sulfur carrier)-H + L-cysteine = (sulfur carrier)-SH + L-alanine. It functions in the pathway cofactor biosynthesis; iron-sulfur cluster biosynthesis. Its function is as follows. Master enzyme that delivers sulfur to a number of partners involved in Fe-S cluster assembly, tRNA modification or cofactor biosynthesis. Catalyzes the removal of elemental sulfur atoms from cysteine to produce alanine. Functions as a sulfur delivery protein for Fe-S cluster synthesis onto IscU, an Fe-S scaffold assembly protein, as well as other S acceptor proteins. This chain is Cysteine desulfurase IscS, found in Stutzerimonas stutzeri (strain A1501) (Pseudomonas stutzeri).